A 906-amino-acid polypeptide reads, in one-letter code: DNA gyrase subunit A (906 aa).

The 490-residue stretch at 35–524 folds into the Topo IIA-type catalytic domain; that stretch reads IPDVRDGLKP…GEFDQDIEDL (490 aa). The active-site O-(5'-phospho-DNA)-tyrosine intermediate is Y123. A GyrA-box motif is present at residues 551 to 557; that stretch reads QKRGGKG. Positions 886-906 are disordered; the sequence is SESEEDSELEEDLEQAEEVYT.

Belongs to the type II topoisomerase GyrA/ParC subunit family. As to quaternary structure, heterotetramer, composed of two GyrA and two GyrB chains. In the heterotetramer, GyrA contains the active site tyrosine that forms a transient covalent intermediate with DNA, while GyrB binds cofactors and catalyzes ATP hydrolysis.

The protein localises to the cytoplasm. The catalysed reaction is ATP-dependent breakage, passage and rejoining of double-stranded DNA.. Functionally, a type II topoisomerase that negatively supercoils closed circular double-stranded (ds) DNA in an ATP-dependent manner to modulate DNA topology and maintain chromosomes in an underwound state. Negative supercoiling favors strand separation, and DNA replication, transcription, recombination and repair, all of which involve strand separation. Also able to catalyze the interconversion of other topological isomers of dsDNA rings, including catenanes and knotted rings. Type II topoisomerases break and join 2 DNA strands simultaneously in an ATP-dependent manner. The polypeptide is DNA gyrase subunit A (Rickettsia felis (strain ATCC VR-1525 / URRWXCal2) (Rickettsia azadi)).